The chain runs to 31 residues: Fibrinogen beta chain (31 aa).

Residues 1-10 (HYYDDTDEEE) show a composition bias toward acidic residues. The interval 1 to 31 (HYYDDTDEEERIVSTVDARGHRPLDKKREEA) is disordered. The residue at position 2 (tyrosine 2) is a Sulfotyrosine; partial. Tyrosine 3 bears the Sulfotyrosine mark. A compositionally biased stretch (basic and acidic residues) spans 18 to 31 (ARGHRPLDKKREEA).

As to quaternary structure, heterohexamer; disulfide linked. Contains 2 sets of 3 non-identical chains (alpha, beta and gamma). The 2 heterotrimers are in head to head conformation with the N-termini in a small central domain. Conversion of fibrinogen to fibrin is triggered by thrombin, which cleaves fibrinopeptides A and B from alpha and beta chains, and thus exposes the N-terminal polymerization sites responsible for the formation of the soft clot.

The protein resides in the secreted. Cleaved by the protease thrombin to yield monomers which, together with fibrinogen alpha (FGA) and fibrinogen gamma (FGG), polymerize to form an insoluble fibrin matrix. Fibrin has a major function in hemostasis as one of the primary components of blood clots. In addition, functions during the early stages of wound repair to stabilize the lesion and guide cell migration during re-epithelialization. Was originally thought to be essential for platelet aggregation, based on in vitro studies using anticoagulated blood. However subsequent studies have shown that it is not absolutely required for thrombus formation in vivo. Enhances expression of SELP in activated platelets. Maternal fibrinogen is essential for successful pregnancy. Fibrin deposition is also associated with infection, where it protects against IFNG-mediated hemorrhage. May also facilitate the antibacterial immune response via both innate and T-cell mediated pathways. This is Fibrinogen beta chain (FGB) from Canis lupus familiaris (Dog).